An 811-amino-acid chain; its full sequence is Lon protease 1 (811 aa).

The Lon N-terminal domain maps to 15 to 212 (LPVLSLRDTV…SLALHLYRQI (198 aa)). 376–383 (GPPGTGKT) is an ATP binding site. The Lon proteolytic domain maps to 613–794 (YDQPGVATGM…DEALARCLRL (182 aa)). Catalysis depends on residues serine 700 and lysine 743.

This sequence belongs to the peptidase S16 family. Homohexamer. Organized in a ring with a central cavity.

The protein localises to the cytoplasm. It carries out the reaction Hydrolysis of proteins in presence of ATP.. ATP-dependent serine protease that mediates the selective degradation of mutant and abnormal proteins as well as certain short-lived regulatory proteins. Required for cellular homeostasis and for survival from DNA damage and developmental changes induced by stress. Degrades polypeptides processively to yield small peptide fragments that are 5 to 10 amino acids long. Binds to DNA in a double-stranded, site-specific manner. The protein is Lon protease 1 of Sorangium cellulosum (strain So ce56) (Polyangium cellulosum (strain So ce56)).